A 127-amino-acid chain; its full sequence is Large ribosomal subunit protein uL22 (127 aa).

This sequence belongs to the universal ribosomal protein uL22 family. In terms of assembly, part of the 50S ribosomal subunit.

In terms of biological role, this protein binds specifically to 23S rRNA; its binding is stimulated by other ribosomal proteins, e.g. L4, L17, and L20. It is important during the early stages of 50S assembly. It makes multiple contacts with different domains of the 23S rRNA in the assembled 50S subunit and ribosome. Its function is as follows. The globular domain of the protein is located near the polypeptide exit tunnel on the outside of the subunit, while an extended beta-hairpin is found that lines the wall of the exit tunnel in the center of the 70S ribosome. This is Large ribosomal subunit protein uL22 from Methylobacterium nodulans (strain LMG 21967 / CNCM I-2342 / ORS 2060).